The primary structure comprises 300 residues: NAD kinase (300 aa).

Asp-77 (proton acceptor) is an active-site residue. NAD(+) is bound by residues 77 to 78, 151 to 152, His-162, Arg-179, Asp-181, and 192 to 197; these read DG, ND, and TAYSLS.

It belongs to the NAD kinase family. Requires a divalent metal cation as cofactor.

The protein resides in the cytoplasm. The enzyme catalyses NAD(+) + ATP = ADP + NADP(+) + H(+). Its function is as follows. Involved in the regulation of the intracellular balance of NAD and NADP, and is a key enzyme in the biosynthesis of NADP. Catalyzes specifically the phosphorylation on 2'-hydroxyl of the adenosine moiety of NAD to yield NADP. This chain is NAD kinase, found in Cellvibrio japonicus (strain Ueda107) (Pseudomonas fluorescens subsp. cellulosa).